The following is a 465-amino-acid chain: Cysteine--tRNA ligase (465 aa).

Cysteine 30 contacts Zn(2+). The 'HIGH' region signature appears at 32 to 42 (ITVYDYCHVGH). Positions 214, 239, and 243 each coordinate Zn(2+). The 'KMSKS' region motif lies at 271 to 275 (KMSKS). Lysine 274 contributes to the ATP binding site.

This sequence belongs to the class-I aminoacyl-tRNA synthetase family. As to quaternary structure, monomer. Requires Zn(2+) as cofactor.

It localises to the cytoplasm. The catalysed reaction is tRNA(Cys) + L-cysteine + ATP = L-cysteinyl-tRNA(Cys) + AMP + diphosphate. This is Cysteine--tRNA ligase from Burkholderia vietnamiensis (strain G4 / LMG 22486) (Burkholderia cepacia (strain R1808)).